Here is a 340-residue protein sequence, read N- to C-terminus: tRNA N6-adenosine threonylcarbamoyltransferase (340 aa).

Fe cation is bound by residues histidine 113 and histidine 117. Residues 135 to 139 (LVSGG), aspartate 169, glycine 182, aspartate 186, and asparagine 274 contribute to the substrate site. Residue aspartate 302 coordinates Fe cation.

This sequence belongs to the KAE1 / TsaD family. Requires Fe(2+) as cofactor.

The protein localises to the cytoplasm. It carries out the reaction L-threonylcarbamoyladenylate + adenosine(37) in tRNA = N(6)-L-threonylcarbamoyladenosine(37) in tRNA + AMP + H(+). Functionally, required for the formation of a threonylcarbamoyl group on adenosine at position 37 (t(6)A37) in tRNAs that read codons beginning with adenine. Is involved in the transfer of the threonylcarbamoyl moiety of threonylcarbamoyl-AMP (TC-AMP) to the N6 group of A37, together with TsaE and TsaB. TsaD likely plays a direct catalytic role in this reaction. In Mycobacterium sp. (strain KMS), this protein is tRNA N6-adenosine threonylcarbamoyltransferase.